Consider the following 425-residue polypeptide: D-arabinitol transporter (425 aa).

Topologically, residues 1 to 7 (MSINNKQ) are cytoplasmic. A helical transmembrane segment spans residues 8–28 (WLGLPLNLLWGYIAIAVFMTG). Over 29–51 (DGFELAFLSHYIKALGFSPAEAS) the chain is Extracellular. Residues 52–72 (FAFTLYGLAAALSAWISGVVA) form a helical membrane-spanning segment. Residues 73-80 (EIITPLKT) lie on the Cytoplasmic side of the membrane. Residues 81 to 101 (MMIGFVLWCVFHVLFLVFGLG) form a helical membrane-spanning segment. The Extracellular portion of the chain corresponds to 102 to 107 (HANYAL). The chain crosses the membrane as a helical span at residues 108 to 128 (ILLFYGIRGFAYPLFLYSFIV). Topologically, residues 129-141 (AIVHNVKSDNASS) are cytoplasmic. Residues 142 to 162 (AIGWFWAVYSIGIGVFGSYIP) form a helical membrane-spanning segment. Residues 163-172 (SFTIPHIGEM) lie on the Extracellular side of the membrane. The helical transmembrane segment at 173-193 (GTLWLALAFCLTGGVIALVSL) threads the bilayer. Topologically, residues 194 to 237 (RHIQTPQHMQNLTTREKFSELGRAATLLYTNRNILLSSMVRIIN) are cytoplasmic. Residues 238–258 (TLSLFGFAVIMPMMFVDELGF) traverse the membrane as a helical segment. Topologically, residues 259–263 (STSEW) are extracellular. Residues 264–284 (LQVWAVFFFTTIFSNVLWGIL) traverse the membrane as a helical segment. Over 285 to 295 (GEKLGWMKVVR) the chain is Cytoplasmic. The chain crosses the membrane as a helical span at residues 296–316 (WFGCIGMALSSLAFYYIPQHF). Residues 317 to 323 (GHSFAMA) lie on the Extracellular side of the membrane. A helical membrane pass occupies residues 324–344 (LIPAIALGIFVAAFVPLAAVF). Residues 345-360 (PALEPKHKGAAISVYN) lie on the Cytoplasmic side of the membrane. The chain crosses the membrane as a helical span at residues 361–381 (LSAGMSNFLAPAIAVVLLPFF). The Extracellular portion of the chain corresponds to 382 to 383 (ST). Residues 384-404 (IGVVIAYTALYVVAFFLCAFI) form a helical membrane-spanning segment. Residues 405 to 425 (RVEQPGFSHKEATAREQVEFS) lie on the Cytoplasmic side of the membrane.

It belongs to the major facilitator superfamily. Sugar transporter (TC 2.A.1.1) family. CsbX subfamily.

It is found in the cell membrane. The polypeptide is D-arabinitol transporter (dalT) (Klebsiella pneumoniae).